Here is a 364-residue protein sequence, read N- to C-terminus: Dihydroorotate dehydrogenase (quinone) (364 aa).

FMN contacts are provided by residues 61–65 and Thr-85; that span reads AGFDK. Position 65 (Lys-65) interacts with substrate. 110–114 provides a ligand contact to substrate; that stretch reads NRMGF. Asn-139 and Asn-170 together coordinate FMN. Asn-170 provides a ligand contact to substrate. Residue Ser-173 is the Nucleophile of the active site. Asn-175 is a substrate binding site. FMN is bound by residues Lys-214 and Ala-242. 243 to 244 contacts substrate; that stretch reads NT. Residues Gly-266, Gly-295, and 316–317 each bind FMN; that span reads YS.

The protein belongs to the dihydroorotate dehydrogenase family. Type 2 subfamily. Monomer. It depends on FMN as a cofactor.

Its subcellular location is the cell membrane. It carries out the reaction (S)-dihydroorotate + a quinone = orotate + a quinol. It participates in pyrimidine metabolism; UMP biosynthesis via de novo pathway; orotate from (S)-dihydroorotate (quinone route): step 1/1. Its function is as follows. Catalyzes the conversion of dihydroorotate to orotate with quinone as electron acceptor. In Rhodopseudomonas palustris (strain TIE-1), this protein is Dihydroorotate dehydrogenase (quinone).